Consider the following 70-residue polypeptide: UPF0519 protein B (70 aa).

Belongs to the UPF0519 family.

This is UPF0519 protein B (sigN122) from Dictyostelium discoideum (Social amoeba).